The primary structure comprises 524 residues: 12S seed storage protein CRC (524 aa).

The first 23 residues, 1 to 23, serve as a signal peptide directing secretion; it reads MVKLSNLLVATFGVLLVLNGCLA. Residues cysteine 37 and cysteine 70 are joined by a disulfide bond. Cupin type-1 domains follow at residues 42–289 and 346–495; these read LDVL…QLAQ and ENID…EEAR. Serine 53 carries the phosphoserine modification. Phosphotyrosine is present on tyrosine 78. Serine 97 bears the Phosphoserine mark. An intrachain disulfide couples cysteine 113 to cysteine 340. Threonine 116 bears the Phosphothreonine mark. The tract at residues 119–190 is disordered; it reads DSQPMQGQQQ…QGQQGQQGFR (72 aa). Over residues 124-188 the composition is skewed to low complexity; sequence QGQQQGQPWQ…EGQGQQGQQG (65 aa). 2 positions are modified to phosphoserine: serine 259 and serine 366. Phosphothreonine is present on threonine 459. Serine 484 bears the Phosphoserine mark. Phosphothreonine is present on threonine 501.

Belongs to the 11S seed storage protein (globulins) family. Hexamer; each subunit is composed of an acidic and a basic chain derived from a single precursor and linked by a disulfide bond. In terms of processing, proteolytically processed during seed maturation at a conserved Asn-Gly peptide bond by an asparaginyl endopeptidase to produce two mature polypeptides referred to as alpha and beta subunits that are joined together by a disulfide bond. Post-translationally, phosphorylated in seeds on some Tyr residues in response to abscisic acid (ABA). Accumulates in seeds 8 days after anthesis.

The protein resides in the protein storage vacuole. Seed storage protein. The protein is 12S seed storage protein CRC (CRC) of Arabidopsis thaliana (Mouse-ear cress).